We begin with the raw amino-acid sequence, 351 residues long: Biotin synthase (351 aa).

Residues N44 to K262 enclose the Radical SAM core domain. Positions 59, 63, and 66 each coordinate [4Fe-4S] cluster. C103, C134, C194, and R266 together coordinate [2Fe-2S] cluster.

Belongs to the radical SAM superfamily. Biotin synthase family. As to quaternary structure, homodimer. The cofactor is [4Fe-4S] cluster. It depends on [2Fe-2S] cluster as a cofactor.

It catalyses the reaction (4R,5S)-dethiobiotin + (sulfur carrier)-SH + 2 reduced [2Fe-2S]-[ferredoxin] + 2 S-adenosyl-L-methionine = (sulfur carrier)-H + biotin + 2 5'-deoxyadenosine + 2 L-methionine + 2 oxidized [2Fe-2S]-[ferredoxin]. The protein operates within cofactor biosynthesis; biotin biosynthesis; biotin from 7,8-diaminononanoate: step 2/2. Catalyzes the conversion of dethiobiotin (DTB) to biotin by the insertion of a sulfur atom into dethiobiotin via a radical-based mechanism. This Stutzerimonas stutzeri (strain A1501) (Pseudomonas stutzeri) protein is Biotin synthase.